The following is a 159-amino-acid chain: 17 kDa surface antigen (159 aa).

The first 19 residues, M1 to A19, serve as a signal peptide directing secretion. The N-palmitoyl cysteine moiety is linked to residue C20. The S-diacylglycerol cysteine moiety is linked to residue C20.

The protein belongs to the rickettsiale 17 kDa surface antigen family.

The protein resides in the cell outer membrane. This is 17 kDa surface antigen (omp) from Rickettsia conorii (strain ATCC VR-613 / Malish 7).